The chain runs to 353 residues: Polyprenal reductase 2 (353 aa).

6 helical membrane-spanning segments follow: residues 11–31 (PLLC…ALPI), 78–98 (FMHF…AIWF), 175–195 (MHIV…LSLA), 234–254 (PLLK…WGSL), 291–308 (YLAE…SGAE), and 313–335 (WFLF…NWYL).

The protein belongs to the steroid 5-alpha reductase family. Polyprenal reductase subfamily.

The protein localises to the cell membrane. It catalyses the reaction a di-trans,poly-cis-dolichal + NADP(+) = a di-trans,poly-cis-polyprenal + NADPH + H(+). It participates in protein modification; protein glycosylation. Functionally, plays a key role in early steps of protein N-linked glycosylation by being involved in the conversion of polyprenol into dolichol. Acts as a polyprenal reductase that mediates the reduction of polyprenal into dolichal in a NADP-dependent mechanism. Dolichols are required for the synthesis of dolichol-linked monosaccharides and the oligosaccharide precursor used for N-glycosylation. This is Polyprenal reductase 2 from Oryza sativa subsp. japonica (Rice).